A 251-amino-acid polypeptide reads, in one-letter code: 5'-nucleotidase SurE (251 aa).

The a divalent metal cation site is built by D9, D10, S40, and N94.

The protein belongs to the SurE nucleotidase family. It depends on a divalent metal cation as a cofactor.

Its subcellular location is the cytoplasm. The enzyme catalyses a ribonucleoside 5'-phosphate + H2O = a ribonucleoside + phosphate. Its function is as follows. Nucleotidase that shows phosphatase activity on nucleoside 5'-monophosphates. The sequence is that of 5'-nucleotidase SurE from Aquifex aeolicus (strain VF5).